Here is a 283-residue protein sequence, read N- to C-terminus: Putative 4-diphosphocytidyl-2-C-methyl-D-erythritol kinase (283 aa).

The active site involves lysine 11. Position 95-105 (95-105 (PVCAGMGGGSS)) interacts with ATP. Aspartate 137 is an active-site residue.

Belongs to the GHMP kinase family. IspE subfamily.

The enzyme catalyses 4-CDP-2-C-methyl-D-erythritol + ATP = 4-CDP-2-C-methyl-D-erythritol 2-phosphate + ADP + H(+). Functionally, catalyzes the phosphorylation of the position 2 hydroxy group of 4-diphosphocytidyl-2C-methyl-D-erythritol. The sequence is that of Putative 4-diphosphocytidyl-2-C-methyl-D-erythritol kinase (ispE) from Streptococcus uberis (strain ATCC BAA-854 / 0140J).